We begin with the raw amino-acid sequence, 411 residues long: Methyl-CpG-binding domain protein 2 (411 aa).

Residues 1 to 149 form a required for interaction with DHX9 and PRMT5 region; that stretch reads MRAHPGGGRC…GPRATESGKR (149 aa). Residues 1 to 158 are disordered; it reads MRAHPGGGRC…RMDCPALPPG (158 aa). The span at 77–95 shows a compositional bias: basic residues; it reads GRGRGRGRGRGRGRGRGRG. Over residues 98–121 the composition is skewed to gly residues; sequence PSGGSGLGGDGGGCGGGGSGGGGA. The 69-residue stretch at 145–213 folds into the MBD domain; that stretch reads ESGKRMDCPA…SSFDFRTGKM (69 aa). The residue at position 181 (serine 181) is a Phosphoserine. The tract at residues 214-241 is disordered; the sequence is MPSKLQKNKQRLRNDPLNQNKGKPDLNT. Residues 229-241 are compositionally biased toward polar residues; it reads PLNQNKGKPDLNT. Position 407 is a phosphoserine (serine 407).

Heterodimer with MBD3 (via N-terminus). Component of the MeCP1 complex that contains HDAC1 and HDAC2. Component of the nucleosome remodeling and deacetylase (NuRD) repressor complex, composed of core proteins MTA1, MTA2, MTA3, RBBP4, RBBP7, HDAC1, HDAC2, MBD2, MBD3, and peripherally associated proteins CDK2AP1, CDK2AP2, GATAD2A, GATAD2B, CHD3, CHD4 and CHD5. The exact stoichiometry of the NuRD complex is unknown, and some subunits such as MBD2 and MBD3, GATAD2A and GATAD2B, and CHD3, CHD4 and CHD5 define mutually exclusive NuRD complexes. Interacts with CDK2AP1. Interacts with DHX9. Interacts with DNMT1. Interacts with GATAD2A/p66-alpha. Interacts with GATAD2B/p66-beta. Interacts with GPN1. Interacts with MIZF. Interacts with PRMT5. Interacts with SIN3A. Interacts with SPHK2. Highly expressed in brain, heart, kidney, stomach, testis and placenta.

The protein resides in the nucleus. It localises to the chromosome. Functionally, binds CpG islands in promoters where the DNA is methylated at position 5 of cytosine within CpG dinucleotides. Binds hemimethylated DNA as well. Recruits histone deacetylases and DNA methyltransferases to chromatin. Acts as a component of the histone deacetylase NuRD complex which participates in the remodeling of chromatin. Acts as a transcriptional repressor and plays a role in gene silencing. Functions as a scaffold protein, targeting GATAD2A and GATAD2B to chromatin to promote repression. May enhance the activation of some unmethylated cAMP-responsive promoters. The protein is Methyl-CpG-binding domain protein 2 of Homo sapiens (Human).